Reading from the N-terminus, the 412-residue chain is Small ribosomal subunit protein mL103 (rPPR7) (412 aa).

A mitochondrion-targeting transit peptide spans M1–F14. Positions G21–K37 are enriched in polar residues. The disordered stretch occupies residues G21–E43. PPR repeat units follow at residues E101–R135, S136–R166, D173–V207, T208–L242, D243–P276, D277–P311, N312–P346, and D347–K377.

It belongs to the PPR family. P subfamily. In terms of assembly, component of the mitochondrial ribosome small subunit.

The protein localises to the mitochondrion. The sequence is that of Small ribosomal subunit protein mL103 (rPPR7) from Arabidopsis thaliana (Mouse-ear cress).